A 754-amino-acid chain; its full sequence is uncharacterized protein (754 aa).

Helical transmembrane passes span 3–23 (ITTV…LPQL), 24–44 (PGTL…FIPV), 50–70 (IALT…ILWA), 223–243 (HLMA…AGLI), 254–274 (WIHW…YAWL), 320–340 (VAIL…LIFW), 370–390 (LLLM…SFIA), 392–412 (LLAI…AMVV), 446–466 (WINI…LLVV), and 471–491 (AWRT…WPLW).

This sequence to B.subtilis ComEC, N.gonorrhoeae ComA, and H.influenzae Rec2.

It is found in the cell membrane. This is an uncharacterized protein from Escherichia coli (strain K12).